Consider the following 93-residue polypeptide: Aspartyl/glutamyl-tRNA(Asn/Gln) amidotransferase subunit C (93 aa).

Belongs to the GatC family. As to quaternary structure, heterotrimer of A, B and C subunits.

It carries out the reaction L-glutamyl-tRNA(Gln) + L-glutamine + ATP + H2O = L-glutaminyl-tRNA(Gln) + L-glutamate + ADP + phosphate + H(+). It catalyses the reaction L-aspartyl-tRNA(Asn) + L-glutamine + ATP + H2O = L-asparaginyl-tRNA(Asn) + L-glutamate + ADP + phosphate + 2 H(+). In terms of biological role, allows the formation of correctly charged Asn-tRNA(Asn) or Gln-tRNA(Gln) through the transamidation of misacylated Asp-tRNA(Asn) or Glu-tRNA(Gln) in organisms which lack either or both of asparaginyl-tRNA or glutaminyl-tRNA synthetases. The reaction takes place in the presence of glutamine and ATP through an activated phospho-Asp-tRNA(Asn) or phospho-Glu-tRNA(Gln). In Methanothrix thermoacetophila (strain DSM 6194 / JCM 14653 / NBRC 101360 / PT) (Methanosaeta thermophila), this protein is Aspartyl/glutamyl-tRNA(Asn/Gln) amidotransferase subunit C.